We begin with the raw amino-acid sequence, 1146 residues long: Nucleolar protein 6 (1146 aa).

The segment at 1–48 is disordered; it reads MGPAPAGEQLRGATGEPEVMEPALEGTGKEGKKASSRKRTLAEPPAKG. S56 bears the Phosphoserine mark. Residues 83-114 adopt a coiled-coil conformation; the sequence is LLRLQVEELLKEVRLSEKKKDRIDAFLREVNQ. 3 positions are modified to phosphoserine: S283, S289, and S811.

Belongs to the NRAP family. As to quaternary structure, part of the small subunit (SSU) processome, composed of more than 70 proteins and the RNA chaperone small nucleolar RNA (snoRNA) U3. Interacts with RRP7A; required for NOL6 localization to nucleolus.

It is found in the nucleus. It localises to the nucleolus. Its subcellular location is the chromosome. Functionally, part of the small subunit (SSU) processome, first precursor of the small eukaryotic ribosomal subunit. During the assembly of the SSU processome in the nucleolus, many ribosome biogenesis factors, an RNA chaperone and ribosomal proteins associate with the nascent pre-rRNA and work in concert to generate RNA folding, modifications, rearrangements and cleavage as well as targeted degradation of pre-ribosomal RNA by the RNA exosome. The polypeptide is Nucleolar protein 6 (Homo sapiens (Human)).